Here is a 389-residue protein sequence, read N- to C-terminus: Succinate--CoA ligase [ADP-forming] subunit beta (389 aa).

Positions 9–236 (RDMFEAHGVP…KDAADPLEAK (228 aa)) constitute an ATP-grasp domain. ATP-binding positions include K45, 52-54 (GRG), A94, and E99. The Mg(2+) site is built by N191 and D205. Residues N256 and 318–320 (GIT) each bind substrate.

The protein belongs to the succinate/malate CoA ligase beta subunit family. As to quaternary structure, heterotetramer of two alpha and two beta subunits. The cofactor is Mg(2+).

The catalysed reaction is succinate + ATP + CoA = succinyl-CoA + ADP + phosphate. The enzyme catalyses GTP + succinate + CoA = succinyl-CoA + GDP + phosphate. Its pathway is carbohydrate metabolism; tricarboxylic acid cycle; succinate from succinyl-CoA (ligase route): step 1/1. Succinyl-CoA synthetase functions in the citric acid cycle (TCA), coupling the hydrolysis of succinyl-CoA to the synthesis of either ATP or GTP and thus represents the only step of substrate-level phosphorylation in the TCA. The beta subunit provides nucleotide specificity of the enzyme and binds the substrate succinate, while the binding sites for coenzyme A and phosphate are found in the alpha subunit. The polypeptide is Succinate--CoA ligase [ADP-forming] subunit beta (Pseudarthrobacter chlorophenolicus (strain ATCC 700700 / DSM 12829 / CIP 107037 / JCM 12360 / KCTC 9906 / NCIMB 13794 / A6) (Arthrobacter chlorophenolicus)).